The sequence spans 133 residues: ATP synthase epsilon chain, chloroplastic (133 aa).

The protein belongs to the ATPase epsilon chain family. In terms of assembly, F-type ATPases have 2 components, CF(1) - the catalytic core - and CF(0) - the membrane proton channel. CF(1) has five subunits: alpha(3), beta(3), gamma(1), delta(1), epsilon(1). CF(0) has three main subunits: a, b and c.

It localises to the plastid. The protein localises to the chloroplast thylakoid membrane. Its function is as follows. Produces ATP from ADP in the presence of a proton gradient across the membrane. The sequence is that of ATP synthase epsilon chain, chloroplastic from Piper cenocladum (Ant piper).